The following is an 897-amino-acid chain: 4-hydroxyphenylacetate decarboxylase glycyl radical subunit (897 aa).

The PFL domain occupies 35-770 (ESTQKLMDIY…VTLATADGRL (736 aa)). Ser344 and Cys503 together coordinate 4-hydroxyphenylacetate. Cys503 (cysteine radical intermediate) is an active-site residue. Glu505 acts as the Proton donor in catalysis. 4-hydroxyphenylacetate is bound by residues His536 and Glu637. A Glycine radical domain is found at 778–897 (GSVSAAAGTD…EVIYRTEYDK (120 aa)). A Glycine radical modification is found at Gly873.

It belongs to the glycyl radical enzyme (GRE) family. HPAD subfamily. In terms of assembly, heterooctamer consisting of 4 large (HpdB) subunits and 4 small (HpdC) subunits, arranged as a tetramer of heterodimers. Also forms a catalytically inactive homodimer. Requires the activating protein CsdA to generate the key active site glycyl radical that is involved in catalysis. Post-translationally, phosphorylated on serine. Phosphorylation may trigger the formation of the active heterooctamers and thereby regulates enzyme activity.

It carries out the reaction 4-hydroxyphenylacetate + H(+) = 4-methylphenol + CO2. It catalyses the reaction 3,4-dihydroxyphenylacetate + H(+) = 4-methylcatechol + CO2. Functionally, glycyl radical subunit of the HPA decarboxylase that decarboxylates phenylacetates with a hydroxyl group in the p-position. Active toward 4-hydroxyphenylacetate and 3,4-dihydroxyphenylacetate, forming 4-methylphenol and 4-methylcatechol, respectively. Is likely involved in the catabolism of aromatic amino acids such as tyrosine fermentation. 4-methylphenol (p-cresol) formation provides metabolic toxicity, which allows an active suppression of other microbes and may provide growth advantages for the producers in highly competitive environments. The large subunit is the catalytic subunit that binds the substrate. This Clostridium scatologenes protein is 4-hydroxyphenylacetate decarboxylase glycyl radical subunit.